We begin with the raw amino-acid sequence, 526 residues long: 2-isopropylmalate synthase (526 aa).

The 263-residue stretch at 5-267 (VIIFDTTLRD…HTGIRHQEIY (263 aa)) folds into the Pyruvate carboxyltransferase domain. Mn(2+) is bound by residues Asp14, His202, His204, and Asn238. Positions 393-526 (RLEYFSVQSG…VPSISTSSTH (134 aa)) are regulatory domain.

The protein belongs to the alpha-IPM synthase/homocitrate synthase family. LeuA type 1 subfamily. As to quaternary structure, homodimer. The cofactor is Mn(2+).

It localises to the cytoplasm. It carries out the reaction 3-methyl-2-oxobutanoate + acetyl-CoA + H2O = (2S)-2-isopropylmalate + CoA + H(+). Its pathway is amino-acid biosynthesis; L-leucine biosynthesis; L-leucine from 3-methyl-2-oxobutanoate: step 1/4. Its function is as follows. Catalyzes the condensation of the acetyl group of acetyl-CoA with 3-methyl-2-oxobutanoate (2-ketoisovalerate) to form 3-carboxy-3-hydroxy-4-methylpentanoate (2-isopropylmalate). In Edwardsiella ictaluri (strain 93-146), this protein is 2-isopropylmalate synthase.